Reading from the N-terminus, the 209-residue chain is Guanylate kinase (209 aa).

The region spanning 9–188 is the Guanylate kinase-like domain; sequence GIMLVISSPS…SVYQIKCIFT (180 aa). Residue 16–23 coordinates ATP; the sequence is SPSGGGKT.

This sequence belongs to the guanylate kinase family.

The protein localises to the cytoplasm. It carries out the reaction GMP + ATP = GDP + ADP. Its function is as follows. Essential for recycling GMP and indirectly, cGMP. This is Guanylate kinase from Ehrlichia chaffeensis (strain ATCC CRL-10679 / Arkansas).